Consider the following 101-residue polypeptide: Ubiquitin-related modifier 1 homolog (101 aa).

Position 101 is a 1-thioglycine (glycine 101). Glycine 101 is covalently cross-linked (Glycyl lysine isopeptide (Gly-Lys) (interchain with K-? in acceptor proteins)).

It belongs to the URM1 family. As to quaternary structure, interacts with cer. C-terminal thiocarboxylation occurs in 2 steps, it is first acyl-adenylated (-COAMP) via the hesA/moeB/thiF part of the MOCS3 homolog, then thiocarboxylated (-COSH) via the rhodanese domain of the MOCS3 homolog.

The protein localises to the cytoplasm. The protein operates within tRNA modification; 5-methoxycarbonylmethyl-2-thiouridine-tRNA biosynthesis. Its function is as follows. Acts as a sulfur carrier required for 2-thiolation of mcm(5)S(2)U at tRNA wobble positions of cytosolic tRNA(Lys), tRNA(Glu) and tRNA(Gln). Serves as sulfur donor in tRNA 2-thiolation reaction by being thiocarboxylated (-COSH) at its C-terminus by MOCS3. The sulfur is then transferred to tRNA to form 2-thiolation of mcm(5)S(2)U. Also acts as a ubiquitin-like protein (UBL) that is covalently conjugated via an isopeptide bond to lysine residues of target proteins such as Prx2/Jafrac1, Ciao1, Eip71CD and GILT1. The thiocarboxylated form serves as substrate for conjugation and oxidative stress specifically induces the formation of UBL-protein conjugates. This is Ubiquitin-related modifier 1 homolog from Drosophila yakuba (Fruit fly).